The chain runs to 123 residues: Ribosome-binding factor A (123 aa).

This sequence belongs to the RbfA family. In terms of assembly, monomer. Binds 30S ribosomal subunits, but not 50S ribosomal subunits or 70S ribosomes.

Its subcellular location is the cytoplasm. One of several proteins that assist in the late maturation steps of the functional core of the 30S ribosomal subunit. Associates with free 30S ribosomal subunits (but not with 30S subunits that are part of 70S ribosomes or polysomes). Required for efficient processing of 16S rRNA. May interact with the 5'-terminal helix region of 16S rRNA. This chain is Ribosome-binding factor A, found in Chlorobium chlorochromatii (strain CaD3).